A 456-amino-acid polypeptide reads, in one-letter code: Kynurenine 3-monooxygenase (456 aa).

It belongs to the aromatic-ring hydroxylase family. KMO subfamily. The cofactor is FAD.

It is found in the mitochondrion outer membrane. It catalyses the reaction L-kynurenine + NADPH + O2 + H(+) = 3-hydroxy-L-kynurenine + NADP(+) + H2O. It functions in the pathway cofactor biosynthesis; NAD(+) biosynthesis; quinolinate from L-kynurenine: step 1/3. Its function is as follows. Catalyzes the hydroxylation of L-kynurenine (L-Kyn) to form 3-hydroxy-L-kynurenine (L-3OHKyn). Required for synthesis of quinolinic acid. The protein is Kynurenine 3-monooxygenase of Candida albicans (strain SC5314 / ATCC MYA-2876) (Yeast).